Consider the following 474-residue polypeptide: Neuronal acetylcholine receptor subunit eat-2 (474 aa).

An N-terminal signal peptide occupies residues 1-21 (MTLKIAFFTLILLVSIERVYS). At 22–237 (SDEEYRLLKD…MHLKRRTMYY (216 aa)) the chain is on the extracellular side. Asn95 carries N-linked (GlcNAc...) asparagine glycosylation. Cys149 and Cys163 are joined by a disulfide. The next 3 membrane-spanning stretches (helical) occupy residues 238–258 (GLNW…GFTM), 266–286 (ITLQ…VSEV), and 303–323 (LSIV…NIFF). Topologically, residues 324 to 440 (RHPKTHRMGD…WRFMAMVIDR (117 aa)) are cytoplasmic. A disordered region spans residues 359-378 (PRREEEKNDEEAGGDGTKLL). A helical membrane pass occupies residues 441-461 (LSLFLFTGLIFGTTALIFAFC).

Belongs to the ligand-gated ion channel (TC 1.A.9) family. Acetylcholine receptor (TC 1.A.9.1) subfamily. Neuronal AChR seems to be composed of two different type of subunits: alpha and beta. Expressed in pharyngeal muscle.

The protein resides in the postsynaptic cell membrane. The protein localises to the cell membrane. After binding acetylcholine, the AChR responds by an extensive change in conformation that affects all subunits and leads to opening of an ion-conducting channel across the plasma membrane. Nicotinic acetylcholine receptor in the MC pharyngeal motor neuron involved in pharyngeal pumping. Has a role in the determination of life span possibly via calorific restriction which affects growth rate, although this is independent of metabolic activity. Plays a role in the defense against the accumulation of ingested live pathogenic bacteria in the intestine. The chain is Neuronal acetylcholine receptor subunit eat-2 from Caenorhabditis elegans.